Here is a 689-residue protein sequence, read N- to C-terminus: MLRSITLSPTRRFGFPPRCVSFTTIKELILTEENDGSSLHYAASSPCFLLLSKCTNIDSLRQSHGVLTGNGLMGDISIATKLVSLYGFFGYTKDARLVFDQIPEPDFYLWKVMLRCYCLNKESVEVVKLYDLLMKHGFRYDDIVFSKALKACTELQDLDNGKKIHCQLVKVPSFDNVVLTGLLDMYAKCGEIKSAHKVFNDITLRNVVCWTSMIAGYVKNDLCEEGLVLFNRMRENNVLGNEYTYGTLIMACTKLSALHQGKWFHGCLVKSGIELSSCLVTSLLDMYVKCGDISNARRVFNEHSHVDLVMWTAMIVGYTHNGSVNEALSLFQKMKGVEIKPNCVTIASVLSGCGLIENLELGRSVHGLSIKVGIWDTNVANALVHMYAKCYQNRDAKYVFEMESEKDIVAWNSIISGFSQNGSIHEALFLFHRMNSESVTPNGVTVASLFSACASLGSLAVGSSLHAYSVKLGFLASSSVHVGTALLDFYAKCGDPQSARLIFDTIEEKNTITWSAMIGGYGKQGDTIGSLELFEEMLKKQQKPNESTFTSILSACGHTGMVNEGKKYFSSMYKDYNFTPSTKHYTCMVDMLARAGELEQALDIIEKMPIQPDVRCFGAFLHGCGMHSRFDLGEIVIKKMLDLHPDDASYYVLVSNLYASDGRWNQAKEVRNLMKQRGLSKIAGHSTME.

The transit peptide at 1-12 (MLRSITLSPTRR) directs the protein to the mitochondrion. PPR repeat units follow at residues 75-105 (DISI…IPEP), 106-140 (DFYL…GFRY), 141-171 (DDIV…LVKV), 175-205 (DNVV…ITLR), 206-240 (NVVC…NVLG), 241-275 (NEYT…GIEL), 276-306 (SSCL…HSHV), 307-341 (DLVM…EIKP), 342-372 (NCVT…SIKV), 376-406 (DTNV…ESEK), 407-441 (DIVA…SVTP), 442-476 (NGVT…GFLA), 479-509 (SVHV…IEEK), 510-544 (NTIT…QQKP), 545-580 (NEST…NFTP), and 581-611 (STKH…MPIQ). The segment at 616–689 (CFGAFLHGCG…SKIAGHSTME (74 aa)) is type E motif; degenerate.

The protein belongs to the PPR family. PCMP-E subfamily.

It localises to the mitochondrion. This Arabidopsis thaliana (Mouse-ear cress) protein is Pentatricopeptide repeat-containing protein At2g03380, mitochondrial (PCMP-E47).